The primary structure comprises 228 residues: Cytidylate kinase (228 aa).

ATP is bound at residue 11-19; the sequence is GPASAGKST.

Belongs to the cytidylate kinase family. Type 1 subfamily.

The protein resides in the cytoplasm. It carries out the reaction CMP + ATP = CDP + ADP. It catalyses the reaction dCMP + ATP = dCDP + ADP. The polypeptide is Cytidylate kinase (Limosilactobacillus reuteri (strain DSM 20016) (Lactobacillus reuteri)).